Reading from the N-terminus, the 190-residue chain is MLLSDRDIRAEIDAGRLGIDPFEDSLVQPSSVDVRLDTLFRVFNNTRYTHIDPAKQQDELTSLVEPSPGEPFVLHPGEFVLGSTLETCTLPDDLAGRLEGKSSLGRLGLLTHSTAGFIDPGFSGHITLELSNVANLPITLWPGMKIGQLCLLRLTSPAEHPYGSAKVGSKYQGQRGPTPSRSYQNFIKLS.

Residues 101-106 (KSSLGR), D119, 127-129 (TLE), Q148, Y162, and Q174 contribute to the dCTP site. E129 serves as the catalytic Proton donor/acceptor. The interval 162–184 (YGSAKVGSKYQGQRGPTPSRSYQ) is disordered. The segment covering 171–184 (YQGQRGPTPSRSYQ) has biased composition (polar residues).

It belongs to the dCTP deaminase family. Homotrimer.

The enzyme catalyses dCTP + 2 H2O = dUMP + NH4(+) + diphosphate. Its pathway is pyrimidine metabolism; dUMP biosynthesis; dUMP from dCTP: step 1/1. Functionally, bifunctional enzyme that catalyzes both the deamination of dCTP to dUTP and the hydrolysis of dUTP to dUMP without releasing the toxic dUTP intermediate. This is dCTP deaminase, dUMP-forming from Mycobacterium sp. (strain JLS).